The primary structure comprises 407 residues: tRNA (guanine(26)-N(2))-dimethyltransferase (407 aa).

Residues 10-400 (AVTHEGRSII…APWGEVLEAV (391 aa)) enclose the Trm1 methyltransferase domain. The S-adenosyl-L-methionine site is built by Arg-50, Arg-82, Asp-99, and Glu-128.

This sequence belongs to the class I-like SAM-binding methyltransferase superfamily. Trm1 family.

The catalysed reaction is guanosine(26) in tRNA + 2 S-adenosyl-L-methionine = N(2)-dimethylguanosine(26) in tRNA + 2 S-adenosyl-L-homocysteine + 2 H(+). Functionally, dimethylates a single guanine residue at position 26 of a number of tRNAs using S-adenosyl-L-methionine as donor of the methyl groups. In Aeropyrum pernix (strain ATCC 700893 / DSM 11879 / JCM 9820 / NBRC 100138 / K1), this protein is tRNA (guanine(26)-N(2))-dimethyltransferase.